The primary structure comprises 343 residues: Vancomycin C-type resistance protein VanC1 (343 aa).

One can recognise an ATP-grasp domain in the interval 134-336 (HQLADTMGIA…YEILVEQLIA (203 aa)). 164 to 219 (IQDHGFPIFIKPNEAGSSKGITKVTDKTALQSALTTAFAYGSTVLIQKAIAGIEIG) provides a ligand contact to ATP. Residues Asp-290, Glu-303, and Asn-305 each coordinate Mg(2+). Mn(2+) is bound by residues Asp-290, Glu-303, and Asn-305.

The protein belongs to the D-alanine--D-alanine ligase family. Mg(2+) serves as cofactor. It depends on Mn(2+) as a cofactor.

It is found in the cell membrane. The catalysed reaction is D-serine + D-alanine + ATP = D-alanyl-D-serine + ADP + phosphate + H(+). Functionally, D-alanine--D-alanine ligase of altered specificity, which catalyzes synthesis of D-Ala-D-Ser; produces a peptidoglycan which does not terminate in D-alanine but in D-serine, thus probably reducing affinity for vancomycin. Together with VanT and VanXYC, required for vancomycin resistance in E.gallinarum strain BM4174. This is Vancomycin C-type resistance protein VanC1 from Enterococcus gallinarum.